Reading from the N-terminus, the 329-residue chain is Ribosomal RNA small subunit methyltransferase C (329 aa).

It belongs to the methyltransferase superfamily. RsmC family. In terms of assembly, monomer.

It is found in the cytoplasm. The catalysed reaction is guanosine(1207) in 16S rRNA + S-adenosyl-L-methionine = N(2)-methylguanosine(1207) in 16S rRNA + S-adenosyl-L-homocysteine + H(+). In terms of biological role, specifically methylates the guanine in position 1207 of 16S rRNA in the 30S particle. The sequence is that of Ribosomal RNA small subunit methyltransferase C from Actinobacillus pleuropneumoniae serotype 5b (strain L20).